The primary structure comprises 209 residues: Uracil phosphoribosyltransferase (209 aa).

5-phospho-alpha-D-ribose 1-diphosphate contacts are provided by residues Arg-79, Arg-104, and 131-139 (DPMLATGGS). Uracil is bound by residues Ile-194 and 199-201 (GDA). 5-phospho-alpha-D-ribose 1-diphosphate is bound at residue Asp-200.

Belongs to the UPRTase family. Requires Mg(2+) as cofactor.

It carries out the reaction UMP + diphosphate = 5-phospho-alpha-D-ribose 1-diphosphate + uracil. Its pathway is pyrimidine metabolism; UMP biosynthesis via salvage pathway; UMP from uracil: step 1/1. Allosterically activated by GTP. In terms of biological role, catalyzes the conversion of uracil and 5-phospho-alpha-D-ribose 1-diphosphate (PRPP) to UMP and diphosphate. This chain is Uracil phosphoribosyltransferase, found in Shouchella clausii (strain KSM-K16) (Alkalihalobacillus clausii).